The chain runs to 955 residues: UPF0182 protein syc2310_c (955 aa).

The next 9 membrane-spanning stretches (helical) occupy residues 12-32 (IAAI…TLWF), 45-65 (LAVQ…LIGG), 85-105 (LQLG…LALT), 141-161 (GSWP…LFLW), 163-183 (PWPL…LLTS), 224-244 (FDLW…YYLA), 263-283 (HLVR…WLAQ), 306-326 (LPLL…LFWQ), and 343-363 (AAIA…QLVV).

Belongs to the UPF0182 family.

The protein localises to the cell membrane. In Synechococcus sp. (strain ATCC 27144 / PCC 6301 / SAUG 1402/1) (Anacystis nidulans), this protein is UPF0182 protein syc2310_c.